An 80-amino-acid chain; its full sequence is Biotin synthase auxiliary protein (80 aa).

It belongs to the BsaP family. The cofactor is iron-sulfur cluster.

Its function is as follows. Required for the activity of the biotin synthase BioB. In Mycobacterium leprae (strain TN), this protein is Biotin synthase auxiliary protein.